The primary structure comprises 1056 residues: Carbamoyl phosphate synthase large chain (1056 aa).

Positions 1 to 397 (MPKKSHIKKV…AFKKALRSLD (397 aa)) are carboxyphosphate synthetic domain. Arginine 127, arginine 167, glycine 173, glycine 174, glutamate 206, valine 208, glutamate 213, glycine 239, isoleucine 240, histidine 241, glutamine 282, and glutamate 294 together coordinate ATP. One can recognise an ATP-grasp 1 domain in the interval 131-323 (RDLMNAIGEP…IARVAAKIAI (193 aa)). Mg(2+) is bound by residues glutamine 282, glutamate 294, and asparagine 296. The Mn(2+) site is built by glutamine 282, glutamate 294, and asparagine 296. Residues 398–530 (NDMQQHTNPS…YSTWEEGCEL (133 aa)) are oligomerization domain. Residues 531–920 (VRDSAKKVLI…YKACTAADNT (390 aa)) are carbamoyl phosphate synthetic domain. The 192-residue stretch at 662 to 853 (SRLLTRLEIP…LAKIAAKVMV (192 aa)) folds into the ATP-grasp 2 domain. Residues arginine 698, serine 737, leucine 739, glutamate 744, glycine 769, valine 770, histidine 771, serine 772, glutamine 812, and glutamate 824 each contribute to the ATP site. Residues glutamine 812, glutamate 824, and asparagine 826 each coordinate Mg(2+). Mn(2+)-binding residues include glutamine 812, glutamate 824, and asparagine 826. Residues 919-1056 (NTLPTTGNVF…EPLGHYHGLM (138 aa)) form the MGS-like domain. The segment at 921–1056 (LPTTGNVFIS…EPLGHYHGLM (136 aa)) is allosteric domain.

Belongs to the CarB family. Composed of two chains; the small (or glutamine) chain promotes the hydrolysis of glutamine to ammonia, which is used by the large (or ammonia) chain to synthesize carbamoyl phosphate. Tetramer of heterodimers (alpha,beta)4. Mg(2+) serves as cofactor. Mn(2+) is required as a cofactor.

The enzyme catalyses hydrogencarbonate + L-glutamine + 2 ATP + H2O = carbamoyl phosphate + L-glutamate + 2 ADP + phosphate + 2 H(+). The catalysed reaction is hydrogencarbonate + NH4(+) + 2 ATP = carbamoyl phosphate + 2 ADP + phosphate + 2 H(+). It functions in the pathway amino-acid biosynthesis; L-arginine biosynthesis; carbamoyl phosphate from bicarbonate: step 1/1. Its pathway is pyrimidine metabolism; UMP biosynthesis via de novo pathway; (S)-dihydroorotate from bicarbonate: step 1/3. In terms of biological role, large subunit of the glutamine-dependent carbamoyl phosphate synthetase (CPSase). CPSase catalyzes the formation of carbamoyl phosphate from the ammonia moiety of glutamine, carbonate, and phosphate donated by ATP, constituting the first step of 2 biosynthetic pathways, one leading to arginine and/or urea and the other to pyrimidine nucleotides. The large subunit (synthetase) binds the substrates ammonia (free or transferred from glutamine from the small subunit), hydrogencarbonate and ATP and carries out an ATP-coupled ligase reaction, activating hydrogencarbonate by forming carboxy phosphate which reacts with ammonia to form carbamoyl phosphate. The protein is Carbamoyl phosphate synthase large chain of Methanoculleus marisnigri (strain ATCC 35101 / DSM 1498 / JR1).